The sequence spans 512 residues: Sugar transport protein MST7 (512 aa).

The Cytoplasmic segment spans residues 1-17 (MENAGAGDGAPKHYPGK). Residues 18-38 (MTVFVFIACLVASSGGLIFGY) traverse the membrane as a helical segment. At 39–81 (DIGISGGVTSMDPFLSRFFPSVYAKEKEVVDTNQYCKFDSEPL) the chain is on the extracellular side. The chain crosses the membrane as a helical span at residues 82–102 (TLFTSSLYLAALIASLFASVI). The Cytoplasmic portion of the chain corresponds to 103–116 (TRKLGRKMTMLGGG). The helical transmembrane segment at 117–137 (FIFLIGAVLNGAAVNVAMLII) threads the bilayer. Topologically, residues 138-139 (GR) are extracellular. The helical transmembrane segment at 140-160 (ILLGIGVGFSIQAVPLYLSEM) threads the bilayer. At 161–166 (APAKMR) the chain is on the cytoplasmic side. A helical transmembrane segment spans residues 167-187 (GMLNIIFQLMITVGILFANLI). Over 188–201 (NYFTDKIAGGWGWR) the chain is Extracellular. Residues 202-222 (VSLGLAAVPAVIMTVGSILLP) traverse the membrane as a helical segment. Residues 223–294 (DTPNSLLSRG…MSVLIPTLQQ (72 aa)) lie on the Cytoplasmic side of the membrane. The helical transmembrane segment at 295–315 (LTGINVVMFYAPVLFKTIGFG) threads the bilayer. The Extracellular segment spans residues 316 to 320 (GTASL). Residues 321-341 (MSAVITGLVNMFATFVSIATV) traverse the membrane as a helical segment. At 342–347 (DRFGRR) the chain is on the cytoplasmic side. A helical membrane pass occupies residues 348–368 (VLFIQGGIQMIIAQFILGTLI). Topologically, residues 369 to 385 (AVKFGTAGVANISQGYA) are extracellular. The helical transmembrane segment at 386–406 (IVVVLFICLFVSAFAWSWGPL) threads the bilayer. The Cytoplasmic portion of the chain corresponds to 407–425 (GWLVPSEIFPLEIRSAAQS). A helical membrane pass occupies residues 426 to 446 (VVVVFNMAFTFFIAQIFLMML). Residues 447–450 (CRLK) are Extracellular-facing. A helical membrane pass occupies residues 451 to 471 (FGLFFFFGAMELIMTGFVLVF). Over 472–512 (LPETKGIPIEEMDRIWGEHWYWSRFVGAGRNRVMQMASTNV) the chain is Cytoplasmic.

Belongs to the major facilitator superfamily. Sugar transporter (TC 2.A.1.1) family.

The protein resides in the membrane. In terms of biological role, mediates active uptake of hexoses by sugar:proton symport. The chain is Sugar transport protein MST7 from Oryza sativa subsp. japonica (Rice).